A 571-amino-acid chain; its full sequence is uncharacterized protein (571 aa).

This is an uncharacterized protein from Methanocaldococcus jannaschii (strain ATCC 43067 / DSM 2661 / JAL-1 / JCM 10045 / NBRC 100440) (Methanococcus jannaschii).